Here is a 708-residue protein sequence, read N- to C-terminus: Exocyst complex component 8 (708 aa).

A PH domain is found at tyrosine 168–arginine 268. Residues alanine 271–alanine 282 are compositionally biased toward basic and acidic residues. The tract at residues alanine 271 to valine 314 is disordered. A compositionally biased stretch (acidic residues) spans phenylalanine 297–valine 314.

Belongs to the EXO84 family. As to quaternary structure, the exocyst complex is composed of EXOC1, EXOC2, EXOC3, EXOC4, EXOC5, EXOC6, EXOC7 and EXOC8.

Its subcellular location is the cytoplasm. It is found in the perinuclear region. The protein resides in the cell projection. The protein localises to the growth cone. In terms of biological role, component of the exocyst complex involved in the docking of exocytic vesicles with fusion sites on the plasma membrane. This Gallus gallus (Chicken) protein is Exocyst complex component 8 (EXOC8).